The primary structure comprises 87 residues: Small ribosomal subunit protein bS20 (87 aa).

Basic residues predominate over residues 1-11 (MANIKSAKKRA). The tract at residues 1-26 (MANIKSAKKRAVQSEKRRQHNASQRS) is disordered.

Belongs to the bacterial ribosomal protein bS20 family.

In terms of biological role, binds directly to 16S ribosomal RNA. The protein is Small ribosomal subunit protein bS20 of Actinobacillus pleuropneumoniae serotype 5b (strain L20).